The following is a 625-amino-acid chain: FMRFamide-activated amiloride-sensitive sodium channel (625 aa).

Over 1–67 (MKYTSAATKP…IVTSRDTKRK (67 aa)) the chain is Cytoplasmic. The helical transmembrane segment at 68–89 (VIWALLVIAGFTAATLQLSLLV) threads the bilayer. The Extracellular segment spans residues 90–536 (RKYLQFQVVE…LADLFADIGG (447 aa)). N-linked (GlcNAc...) asparagine glycans are attached at residues asparagine 134, asparagine 196, asparagine 303, asparagine 349, asparagine 365, asparagine 372, and asparagine 473. The chain crosses the membrane as a helical span at residues 537–557 (TLGLWMGISVLTIMELIELVI). Topologically, residues 558–625 (RLTGLVFNSE…DFRRGVESPV (68 aa)) are cytoplasmic. The disordered stretch occupies residues 570–591 (LPRGPTTVNNNNGSNNHSQSTS). Positions 575–591 (TTVNNNNGSNNHSQSTS) are enriched in low complexity.

The protein belongs to the amiloride-sensitive sodium channel (TC 1.A.6) family. In terms of tissue distribution, muscle and nervous tissue.

It localises to the membrane. FMRFamide-gated ionotropic receptor. The protein is FMRFamide-activated amiloride-sensitive sodium channel of Cornu aspersum (Brown garden snail).